The sequence spans 237 residues: Uridylate kinase (237 aa).

12–15 serves as a coordination point for ATP; it reads KLSG. Residues 20 to 25 are involved in allosteric activation by GTP; that stretch reads GEDGLG. Gly54 provides a ligand contact to UMP. ATP contacts are provided by Gly55 and Arg59. Residues Asp74 and 135–142 contribute to the UMP site; that span reads TGNPFFTT. 3 residues coordinate ATP: Thr162, Tyr168, and Asp171.

The protein belongs to the UMP kinase family. As to quaternary structure, homohexamer.

Its subcellular location is the cytoplasm. The enzyme catalyses UMP + ATP = UDP + ADP. Its pathway is pyrimidine metabolism; CTP biosynthesis via de novo pathway; UDP from UMP (UMPK route): step 1/1. Its activity is regulated as follows. Allosterically activated by GTP. Inhibited by UTP. Catalyzes the reversible phosphorylation of UMP to UDP. The protein is Uridylate kinase of Haemophilus influenzae (strain PittEE).